Here is a 681-residue protein sequence, read N- to C-terminus: U3 small nucleolar ribonucleoprotein protein MPP10 (681 aa).

Phosphoserine is present on residues Ser-61, Ser-120, and Ser-140. The stretch at 109 to 139 (ECEDEECEEDASEVEADNQENLETDLDEEQL) forms a coiled coil. Over residues 111–144 (EDEECEEDASEVEADNQENLETDLDEEQLSDEGG) the composition is skewed to acidic residues. 3 disordered regions span residues 111–202 (EDEE…SVVD), 215–256 (LEKV…GRQK), and 268–365 (YKDF…EKRQ). Positions 145–163 (DVPKGRDRAKSSRKSDPRK) are enriched in basic and acidic residues. A phosphoserine mark is found at Ser-164, Ser-168, and Ser-172. A compositionally biased stretch (basic and acidic residues) spans 215-227 (LEKVEKEEEKRPD). Composition is skewed to acidic residues over residues 228-248 (GEEE…DESE) and 273-322 (DPVE…EDEN). 4 positions are modified to phosphoserine: Ser-244, Ser-247, Ser-277, and Ser-346. Positions 349 to 383 (AVKQESDEVKSSFEKRQEKMNEKIASLEKELLDKK) form a coiled coil. A Glycyl lysine isopeptide (Lys-Gly) (interchain with G-Cter in SUMO2) cross-link involves residue Lys-351. Residues 352-365 (QESDEVKSSFEKRQ) show a composition bias toward basic and acidic residues. Residues Lys-383 and Lys-395 each participate in a glycyl lysine isopeptide (Lys-Gly) (interchain with G-Cter in SUMO2) cross-link. The stretch at 471–491 (AEIYEQEYLKLNQQKTEEEDN) forms a coiled coil. A Glycyl lysine isopeptide (Lys-Gly) (interchain with G-Cter in SUMO2) cross-link involves residue Lys-556. Over residues 560-576 (KAGDLKTAAEKTATDKK) the composition is skewed to basic and acidic residues. Positions 560 to 644 (KAGDLKTAAE…RKDKPLKSSQ (85 aa)) are disordered. The stretch at 575–604 (KKRERRKKKYQKRLKIKEKEKRKKLLEKNN) forms a coiled coil. Residues 577 to 599 (RERRKKKYQKRLKIKEKEKRKKL) show a composition bias toward basic residues. Lys-609 is subject to N6-acetyllysine. The segment covering 630 to 640 (LLKDERKDKPL) has biased composition (basic and acidic residues). Glycyl lysine isopeptide (Lys-Gly) (interchain with G-Cter in SUMO2) cross-links involve residues Lys-632 and Lys-649. Residues 657-681 (QINDAKQPEKIKKKKQDISVHKLKL) form a disordered region. Residues 662–681 (KQPEKIKKKKQDISVHKLKL) are compositionally biased toward basic and acidic residues.

The protein belongs to the MPP10 family. In terms of assembly, part of the small subunit (SSU) processome, composed of more than 70 proteins and the RNA chaperone small nucleolar RNA (snoRNA) U3. Component of a heterotrimeric complex containing IMP3, IMP4 and MPHOSPH10. Interacts with IMP3 and IMP4. Phosphorylated in M (mitotic) phase.

Its subcellular location is the nucleus. The protein localises to the nucleolus. It localises to the chromosome. In terms of biological role, component of the 60-80S U3 small nucleolar ribonucleoprotein (U3 snoRNP). Required for the early cleavages during pre-18S ribosomal RNA processing. Part of the small subunit (SSU) processome, first precursor of the small eukaryotic ribosomal subunit. During the assembly of the SSU processome in the nucleolus, many ribosome biogenesis factors, an RNA chaperone and ribosomal proteins associate with the nascent pre-rRNA and work in concert to generate RNA folding, modifications, rearrangements and cleavage as well as targeted degradation of pre-ribosomal RNA by the RNA exosome. The sequence is that of U3 small nucleolar ribonucleoprotein protein MPP10 (Mphosph10) from Mus musculus (Mouse).